The sequence spans 144 residues: Large ribosomal subunit protein uL11 (144 aa).

It belongs to the universal ribosomal protein uL11 family. As to quaternary structure, part of the ribosomal stalk of the 50S ribosomal subunit. Interacts with L10 and the large rRNA to form the base of the stalk. L10 forms an elongated spine to which L12 dimers bind in a sequential fashion forming a multimeric L10(L12)X complex. In terms of processing, one or more lysine residues are methylated.

Its function is as follows. Forms part of the ribosomal stalk which helps the ribosome interact with GTP-bound translation factors. This Gluconobacter oxydans (strain 621H) (Gluconobacter suboxydans) protein is Large ribosomal subunit protein uL11.